Here is a 583-residue protein sequence, read N- to C-terminus: Penicillin-binding protein activator LpoA (583 aa).

The first 24 residues, 1 to 24, serve as a signal peptide directing secretion; it reads MATILKQKLKTFFVPTAITLLLSA. C25 is lipidated: N-palmitoyl cysteine. C25 is lipidated: S-diacylglycerol cysteine.

Belongs to the LpoA family. Interacts with PBP1a.

It is found in the cell outer membrane. Regulator of peptidoglycan synthesis that is essential for the function of penicillin-binding protein 1A (PBP1a). The polypeptide is Penicillin-binding protein activator LpoA (Haemophilus ducreyi (strain 35000HP / ATCC 700724)).